The primary structure comprises 367 residues: MSQNGKIIPNLDQNSTRLLNLTVLQRIDPYIEEILITAAHVTFYEFNIELSQWSRKDVEGSLFVVKRSTQPRFQFIVMNRRNTDNLVENLLGDFEYEVQGPYLLYRNASQEVNGIWFYNKRECEEVATLFNRILSAYSKVNQKPKASSSKSEFEELEAKPTMAVMDGPLEPSSTARDAPDDPAFVNFFSSTMNLGNTASGSASGPYQSSAIPHQPHQPHQPTIAPPVAAAAPPQIQSPPPLQSSSPLMTLFDNNPEVISSNSNIHTDLVTPSFFGPPRMMAQPHLIPGVSMPTAPPLNPNNASHQQRSYGTPVLQPFPPPTPPPSLAPAPTGPVISRDKVKEALLSLLQEDEFIDKITRTLQNALQQ.

3 disordered regions span residues 144 to 179, 196 to 246, and 299 to 333; these read PKASSSKSEFEELEAKPTMAVMDGPLEPSSTARDAP, NTAS…SSSP, and PNNASHQQRSYGTPVLQPFPPPTPPPSLAPAPTGP. The span at 196–211 shows a compositional bias: polar residues; it reads NTASGSASGPYQSSAI. Residues 212–234 show a composition bias toward low complexity; that stretch reads PHQPHQPHQPTIAPPVAAAAPPQ. The segment covering 299 to 309 has biased composition (polar residues); the sequence is PNNASHQQRSY. Over residues 315 to 331 the composition is skewed to pro residues; the sequence is QPFPPPTPPPSLAPAPT.

The protein belongs to the DCP1 family. Homodimer. Component of the decapping complex. Interacts with DCP2 and DCP5. Interacts with BCHA1. As to expression, expressed in seedlings, mostly in root tips, root hairs, and the vascular system. Also present in roots, leaves, stems, and flowers.

It is found in the cytoplasm. The protein localises to the P-body. As a component of the decapping complex, involved in the degradation of mRNAs. Essential for postembryonic development. The chain is mRNA-decapping enzyme-like protein from Arabidopsis thaliana (Mouse-ear cress).